An 866-amino-acid polypeptide reads, in one-letter code: Probable outer membrane usher protein ElfC (866 aa).

The signal sequence occupies residues 1–35 (MYRTHRQHSLLSSGGVPSFIGGLVVFVSAAFNAQA).

Belongs to the fimbrial export usher family.

The protein localises to the cell outer membrane. Functionally, part of the elfADCG fimbrial operon, which could be required for adherence to host epithelial cells. Could be involved in the export and assembly of the ElfA fimbrial subunits across the outer membrane. The polypeptide is Probable outer membrane usher protein ElfC (elfC) (Escherichia coli O157:H7).